A 54-amino-acid polypeptide reads, in one-letter code: Ribulose bisphosphate carboxylase large chain (54 aa).

A propeptide spanning residues methionine 1–serine 2 is cleaved from the precursor. Proline 3 is modified (N-acetylproline). At lysine 14 the chain carries N6,N6,N6-trimethyllysine.

It belongs to the RuBisCO large chain family. Type I subfamily. As to quaternary structure, heterohexadecamer of 8 large chains and 8 small chains.

The protein localises to the plastid. It is found in the chloroplast. The catalysed reaction is 2 (2R)-3-phosphoglycerate + 2 H(+) = D-ribulose 1,5-bisphosphate + CO2 + H2O. It carries out the reaction D-ribulose 1,5-bisphosphate + O2 = 2-phosphoglycolate + (2R)-3-phosphoglycerate + 2 H(+). Functionally, ruBisCO catalyzes two reactions: the carboxylation of D-ribulose 1,5-bisphosphate, the primary event in carbon dioxide fixation, as well as the oxidative fragmentation of the pentose substrate in the photorespiration process. Both reactions occur simultaneously and in competition at the same active site. The protein is Ribulose bisphosphate carboxylase large chain (rbcL) of Geum borisii (Avens).